A 156-amino-acid chain; its full sequence is MNLNATLIGQLIAFALFVAFCMKYVWPPLIKAIEERQANIANALSSAEKAKQEQADSKVLAEQEIIKAKEEAQKIIDLATKRRNEILESVQADAEVERQRIIEQGHAEIDSERKRVQEELRQKVAALAVAGAERIVGRSVDTAANNDIIDKLVAEL.

The chain crosses the membrane as a helical span at residues 7-26 (LIGQLIAFALFVAFCMKYVW).

The protein belongs to the ATPase B chain family. As to quaternary structure, F-type ATPases have 2 components, F(1) - the catalytic core - and F(0) - the membrane proton channel. F(1) has five subunits: alpha(3), beta(3), gamma(1), delta(1), epsilon(1). F(0) has three main subunits: a(1), b(2) and c(10-14). The alpha and beta chains form an alternating ring which encloses part of the gamma chain. F(1) is attached to F(0) by a central stalk formed by the gamma and epsilon chains, while a peripheral stalk is formed by the delta and b chains.

Its subcellular location is the cell inner membrane. Its function is as follows. F(1)F(0) ATP synthase produces ATP from ADP in the presence of a proton or sodium gradient. F-type ATPases consist of two structural domains, F(1) containing the extramembraneous catalytic core and F(0) containing the membrane proton channel, linked together by a central stalk and a peripheral stalk. During catalysis, ATP synthesis in the catalytic domain of F(1) is coupled via a rotary mechanism of the central stalk subunits to proton translocation. Functionally, component of the F(0) channel, it forms part of the peripheral stalk, linking F(1) to F(0). This chain is ATP synthase subunit b, found in Haemophilus ducreyi (strain 35000HP / ATCC 700724).